The sequence spans 308 residues: GTP-binding protein RAD (308 aa).

Positions 1-15 (MTLNGGSGASGSRGA) are enriched in gly residues. Residues 1-86 (MTLNGGSGAS…SDSLSSGGSG (86 aa)) are disordered. Position 24 is an omega-N-methylarginine (arginine 24). Serine 26 is subject to Phosphoserine. Residues 57-82 (ATTAAGTRTQGQRLDWPEGSSDSLSS) are compositionally biased toward low complexity. GTP is bound by residues 98–105 (GAPGVGKS) and 203–206 (NKSD). Positions 278–297 (AKRFLGRIVARNSRKMAFRA) are calmodulin-binding.

This sequence belongs to the small GTPase superfamily. RGK family. In terms of assembly, interacts with Calmodulin preferentially in the inactive, GDP-bound form. Interacts with CAMK2D. Interacts with CACNB2; interaction may be involved in beta-adrenergic regulation of heart rate and contractile force. Interaction with CACNB2 regulates the trafficking of CACNA1C to the cell membrane. In terms of processing, phosphorylation at Ser-26, Ser-39, Ser-273 and Ser-301 may be involved in regulating inhibition of voltage-gated L-type Ca(2+) channels.

It is found in the cell membrane. May regulate basal voltage-dependent L-type Ca(2+) currents and be required for beta-adrenergic augmentation of Ca(2+) influx in cardiomyocytes, thereby regulating increases in heart rate and contractile force. May play an important role in cardiac antiarrhythmia via the strong suppression of voltage-dependent L-type Ca(2+) currents. Regulates voltage-gated L-type calcium channel subunit alpha-1C trafficking to the cell membrane. Inhibits cardiac hypertrophy through the calmodulin-dependent kinase II (CaMKII) pathway. Inhibits phosphorylation and activation of CAMK2D. This is GTP-binding protein RAD (Rrad) from Mus musculus (Mouse).